Here is a 257-residue protein sequence, read N- to C-terminus: MPLAKRIIPCLDVDNGRVVKGVKFLDIRDAGDPVEIAKRYNQEGADEITFLDITATHEGRDTTVHTVEKIASEVFIPLTVGGGIRTVDDIRTMLNAGADKVSINSAAVFNPDFVKAASDRFGAQCIVVAIDAKKVSAEGEMPRWEIFTHGGRKPTGIDAVEWAVKMAGYGAGEILLTSMDGDGTKKGYDLGVTRAISDAVPIPVIASGGVGNLQHLVDGVTLGRADAVLAASIFHFREYTLPQAKEFMRAQGIEVRL.

Residues D12 and D131 contribute to the active site.

This sequence belongs to the HisA/HisF family. Heterodimer of HisH and HisF.

It localises to the cytoplasm. It catalyses the reaction 5-[(5-phospho-1-deoxy-D-ribulos-1-ylimino)methylamino]-1-(5-phospho-beta-D-ribosyl)imidazole-4-carboxamide + L-glutamine = D-erythro-1-(imidazol-4-yl)glycerol 3-phosphate + 5-amino-1-(5-phospho-beta-D-ribosyl)imidazole-4-carboxamide + L-glutamate + H(+). Its pathway is amino-acid biosynthesis; L-histidine biosynthesis; L-histidine from 5-phospho-alpha-D-ribose 1-diphosphate: step 5/9. IGPS catalyzes the conversion of PRFAR and glutamine to IGP, AICAR and glutamate. The HisF subunit catalyzes the cyclization activity that produces IGP and AICAR from PRFAR using the ammonia provided by the HisH subunit. This chain is Imidazole glycerol phosphate synthase subunit HisF, found in Cellvibrio japonicus (strain Ueda107) (Pseudomonas fluorescens subsp. cellulosa).